The following is a 335-amino-acid chain: MKLAINGFGRIGRNVFKIAFERGIDIVAINDLTDPKTLAHLLKYDSTFGVYNKKVESRDGAIVVDGREIKIIAERDPKNLPWAKLGIDVVIESTGVFSSATSDKGGYLDHVNHAGAKKVILTVPAKDEIKTIVLGVNDHDINSDLKAVSNASCTTNCLAPLAKVLHESFGIEQGLMTTVHAYTNDQRILDLPHSDLRRARAAALSIIPTSTGAAKAVGLVLPELKGKLNGTSMRVPVPTGSIVDLTVQLKKKDVTKEEINSVLRKASETPELKGILGYTEDPIVSSDIKGNSHSSIVDGLETMVLENGFAKILSWYDNEFGYSTRVVDLAQKLVK.

NAD(+) contacts are provided by residues arginine 10–isoleucine 11, aspartate 31, arginine 75, and threonine 122. Residues serine 152–threonine 154 and threonine 183 each bind D-glyceraldehyde 3-phosphate. Cysteine 153 acts as the Nucleophile in catalysis. Asparagine 184 lines the NAD(+) pocket. D-glyceraldehyde 3-phosphate is bound by residues arginine 198, threonine 211–glycine 212, and arginine 234. Asparagine 318 provides a ligand contact to NAD(+).

Belongs to the glyceraldehyde-3-phosphate dehydrogenase family. As to quaternary structure, homotetramer.

The protein resides in the cytoplasm. It carries out the reaction D-glyceraldehyde 3-phosphate + phosphate + NAD(+) = (2R)-3-phospho-glyceroyl phosphate + NADH + H(+). It functions in the pathway carbohydrate degradation; glycolysis; pyruvate from D-glyceraldehyde 3-phosphate: step 1/5. Catalyzes the oxidative phosphorylation of glyceraldehyde 3-phosphate (G3P) to 1,3-bisphosphoglycerate (BPG) using the cofactor NAD. The first reaction step involves the formation of a hemiacetal intermediate between G3P and a cysteine residue, and this hemiacetal intermediate is then oxidized to a thioester, with concomitant reduction of NAD to NADH. The reduced NADH is then exchanged with the second NAD, and the thioester is attacked by a nucleophilic inorganic phosphate to produce BPG. The chain is Glyceraldehyde-3-phosphate dehydrogenase (gap) from Borreliella burgdorferi (strain ATCC 35210 / DSM 4680 / CIP 102532 / B31) (Borrelia burgdorferi).